The primary structure comprises 904 residues: Toll-like receptor 3 (904 aa).

Positions 1 to 26 (MSRPLPYHIYFFTGLLTCWILCTSSA) are cleaved as a signal peptide. The LRRNT domain occupies 27–52 (HKCTVRHEVADCSHLKLTQIPEDLPT). The Lumenal segment spans residues 27–705 (HKCTVRHEVA…PCKDSAPFEL (679 aa)). Cysteines 29 and 38 form a disulfide. 3 N-linked (GlcNAc...) asparagine glycosylation sites follow: Asn53, Asn58, and Asn71. 6 LRR repeats span residues 53–74 (NITV…NFTR), 77–98 (RLTI…LCQN), 101–122 (WLEI…TFVF), 125–146 (NLTE…PFKN), 149–170 (NLIK…TQLQ), and 173–196 (NLQE…DFLG). An intrachain disulfide couples Cys96 to Cys123. Residue Asn125 is glycosylated (N-linked (GlcNAc...) asparagine). Asn197 carries an N-linked (GlcNAc...) asparagine glycan. LRR repeat units lie at residues 199-220 (SLER…CFHA) and 223-245 (KLSG…LCLE). Residues Asn248, Asn253, Asn276, and Asn292 are each glycosylated (N-linked (GlcNAc...) asparagine). 14 LRR repeats span residues 250-271 (SIEN…TFSG), 276-297 (NLTT…SFAW), 300-321 (HLEY…SFYG), 324-345 (NLRH…TSLP), 357-378 (CLEY…TFTG), 381-401 (RLKF…TNET), 409-430 (PLLL…AFSW), 433-455 (HLEV…EWRG), 466-487 (YNKY…QRLM), 508-529 (NLVI…LLKG), 532-553 (KLEI…ANPG), 564-585 (HLRI…AFKD), 588-609 (ELKS…VFDN), and 612-633 (SLKS…VFGP). 2 N-linked (GlcNAc...) asparagine glycosylation sites follow: Asn399 and Asn414. Residues Asn637, Asn663, and Asn668 are each glycosylated (N-linked (GlcNAc...) asparagine). The LRRCT domain maps to 646–699 (NPFDCTCESIAWFVNWINSTHTNISELSNHYLCNTPPQYHGFPVMLFDVSPCKD). 2 disulfide bridges follow: Cys650–Cys678 and Cys652–Cys697. A helical membrane pass occupies residues 706–726 (LFMINTNILLIFIFIVLLIHF). Residues 727–904 (EGWRISFYWN…VALGSRNSAH (178 aa)) are Cytoplasmic-facing. A TIR domain is found at 754 to 897 (FEYAAYIIHA…AFHHKLKVAL (144 aa)). Tyr759 is modified (phosphotyrosine). Residues Lys812 and Lys831 each participate in a glycyl lysine isopeptide (Lys-Gly) (interchain with G-Cter in ubiquitin) cross-link. Tyr858 carries the phosphotyrosine modification.

This sequence belongs to the Toll-like receptor family. As to quaternary structure, monomer and homodimer; dimerization is triggered by ligand-binding and is required for TLR3 signaling. Interacts (via transmembrane domain) with UNC93B1. Interacts with TICAM1 (via the TIR domain) in response to poly(I:C) and this interaction is enhanced the presence of WDFY1. Interacts with SRC; upon binding of double-stranded RNA. The tyrosine-phosphorylated form (via TIR domain) interacts with WDFY1 (via WD repeat 2) in response to poly(I:C). Ubiquitinated by TRIM3; leading to recognition and sorting of polyubiquitinated TLR3 by the ESCRT complexes. Ubiquitinated by ZNRF1 via 'Lys-63'-linked ubiquitin chains; leading to TLR3 lysosomal trafficking and degradation.

The protein localises to the endoplasmic reticulum membrane. It localises to the endosome membrane. The protein resides in the early endosome. Functionally, key component of innate and adaptive immunity. TLRs (Toll-like receptors) control host immune response against pathogens through recognition of molecular patterns specific to microorganisms. TLR3 is a nucleotide-sensing TLR which is activated by double-stranded RNA, a sign of viral infection. Acts via the adapter TRIF/TICAM1, leading to NF-kappa-B activation, cytokine secretion and the inflammatory response. The polypeptide is Toll-like receptor 3 (TLR3) (Boselaphus tragocamelus (Nilgai)).